The chain runs to 374 residues: Alcohol dehydrogenase class-3 (374 aa).

A2 carries the N-acetylalanine modification. 7 residues coordinate Zn(2+): C45, H67, C97, C100, C103, C111, and C174. K233 carries the post-translational modification N6-succinyllysine. Phosphoserine is present on S247. K315 carries the N6-succinyllysine modification. Residues S324 and S351 each carry the phosphoserine modification.

It belongs to the zinc-containing alcohol dehydrogenase family. Class-III subfamily. Homodimer. Requires Zn(2+) as cofactor.

Its subcellular location is the cytoplasm. The catalysed reaction is a primary alcohol + NAD(+) = an aldehyde + NADH + H(+). It carries out the reaction a secondary alcohol + NAD(+) = a ketone + NADH + H(+). The enzyme catalyses S-(hydroxymethyl)glutathione + NADP(+) = S-formylglutathione + NADPH + H(+). It catalyses the reaction S-(hydroxymethyl)glutathione + NAD(+) = S-formylglutathione + NADH + H(+). The catalysed reaction is 20-oxo-(5Z,8Z,11Z,14Z)-eicosatetraenoate + NAD(+) + H2O = (5Z,8Z,11Z,14Z)-eicosatetraenedioate + NADH + 2 H(+). It carries out the reaction 20-hydroxy-(5Z,8Z,11Z,14Z)-eicosatetraenoate + NAD(+) = 20-oxo-(5Z,8Z,11Z,14Z)-eicosatetraenoate + NADH + H(+). The enzyme catalyses S-nitrosoglutathione + NADH + H(+) = S-(hydroxysulfenamide)glutathione + NAD(+). Its function is as follows. Catalyzes the oxidation of long-chain primary alcohols and the oxidation of S-(hydroxymethyl) glutathione. Also oxidizes long chain omega-hydroxy fatty acids, such as 20-HETE, producing both the intermediate aldehyde, 20-oxoarachidonate and the end product, a dicarboxylic acid, (5Z,8Z,11Z,14Z)-eicosatetraenedioate. Class-III ADH is remarkably ineffective in oxidizing ethanol. Required for clearance of cellular formaldehyde, a cytotoxic and carcinogenic metabolite that induces DNA damage. Also acts as a S-nitroso-glutathione reductase by catalyzing the NADH-dependent reduction of S-nitrosoglutathione, thereby regulating protein S-nitrosylation. This chain is Alcohol dehydrogenase class-3, found in Homo sapiens (Human).